The chain runs to 287 residues: PAK4-inhibitor INKA1 (287 aa).

Disordered stretches follow at residues 22–59 (GRDT…LEED) and 138–157 (SRAP…KSTP). A compositionally biased stretch (polar residues) spans 35 to 50 (QPTSQTGPDVQPSHQL). Over residues 138-147 (SRAPVASVPP) the composition is skewed to low complexity. 2 inka box regions span residues 168–205 (EAED…ELPE) and 261–287 (PADV…VSYL).

This sequence belongs to the INKA family. In terms of assembly, interacts with PAK4.

It is found in the nucleus. It localises to the cytoplasm. Functionally, inhibitor of the serine/threonine-protein kinase PAK4. Acts by binding PAK4 in a substrate-like manner, inhibiting the protein kinase activity. This Homo sapiens (Human) protein is PAK4-inhibitor INKA1.